Here is a 260-residue protein sequence, read N- to C-terminus: Imidazole glycerol phosphate synthase subunit HisF (260 aa).

Residues Asp11 and Asp130 contribute to the active site.

The protein belongs to the HisA/HisF family. In terms of assembly, heterodimer of HisH and HisF.

The protein resides in the cytoplasm. It catalyses the reaction 5-[(5-phospho-1-deoxy-D-ribulos-1-ylimino)methylamino]-1-(5-phospho-beta-D-ribosyl)imidazole-4-carboxamide + L-glutamine = D-erythro-1-(imidazol-4-yl)glycerol 3-phosphate + 5-amino-1-(5-phospho-beta-D-ribosyl)imidazole-4-carboxamide + L-glutamate + H(+). The protein operates within amino-acid biosynthesis; L-histidine biosynthesis; L-histidine from 5-phospho-alpha-D-ribose 1-diphosphate: step 5/9. IGPS catalyzes the conversion of PRFAR and glutamine to IGP, AICAR and glutamate. The HisF subunit catalyzes the cyclization activity that produces IGP and AICAR from PRFAR using the ammonia provided by the HisH subunit. This Thermomicrobium roseum (strain ATCC 27502 / DSM 5159 / P-2) protein is Imidazole glycerol phosphate synthase subunit HisF.